We begin with the raw amino-acid sequence, 459 residues long: MTKFTKNKQEKNIIITIKRLGINGEGIGYYKKKIIFIPGALPNEVVVAKIVDRHPHYLEGELVRIKEKSPDRVTFPKGVDPAVGGLELAHLSYPKQLEFKQHLILESLRKYHPRDYIKYKVKKTIPTPNAWNYRNKAQYQIEFNKGKSKLGLYAPNSRRLIDLPDMPTQTKETQKVEREIKKLIDKLHIRIADFRRHTDGIKTIAVRQSNATGEIQVTLITIGKKIKDLKLLASHIMKLPNVVSVFQNETQWQNPQVWGNKTIKLFGKSHITEEILGKKFKLSPRAFFQLNPEQTTTLYSEALKYLDLTPDQTLIDAYAGVGTLGILASDQVRQVIGIESIPEAVIDAQENCRLNHVRNAEYIQGNVEKLLPELKNQGVPINALIVDPPRTGLSKKLIKTLLEVKPETFVYVSCNPATLAKDLVLLSDAYDVRVIQPVDMMPQTPRWEGVTKLVLRKNK.

The region spanning lysine 6–arginine 64 is the TRAM domain. S-adenosyl-L-methionine-binding residues include glutamine 289, tyrosine 318, glutamate 339, and aspartate 387. The Nucleophile role is filled by cysteine 414.

It belongs to the class I-like SAM-binding methyltransferase superfamily. RNA M5U methyltransferase family.

This is an uncharacterized protein from Lactobacillus johnsonii (strain CNCM I-12250 / La1 / NCC 533).